Consider the following 1257-residue polypeptide: Elongation factor 2 (1257 aa).

The DOD-type homing endonuclease domain occupies 273–402 (LAGLMFGDGC…LQLLLQKFDV (130 aa)). Residues 541-782 (VEEHHNFAAE…MVVKHLPDPV (242 aa)) form the tr-type G domain. GTP-binding positions include 616–620 (DTPGH) and 670–673 (NKVD). His-1120 is subject to Diphthamide. The segment covering 1237–1250 (ERKGLKPEPPKPED) has biased composition (basic and acidic residues). The tract at residues 1237–1257 (ERKGLKPEPPKPEDYIEDYGG) is disordered.

This sequence belongs to the TRAFAC class translation factor GTPase superfamily. Classic translation factor GTPase family. EF-G/EF-2 subfamily. Post-translationally, this protein undergoes a protein self splicing that involves a post-translational excision of the intervening region (intein) followed by peptide ligation.

It is found in the cytoplasm. Functionally, catalyzes the GTP-dependent ribosomal translocation step during translation elongation. During this step, the ribosome changes from the pre-translocational (PRE) to the post-translocational (POST) state as the newly formed A-site-bound peptidyl-tRNA and P-site-bound deacylated tRNA move to the P and E sites, respectively. Catalyzes the coordinated movement of the two tRNA molecules, the mRNA and conformational changes in the ribosome. The protein is Elongation factor 2 of Methanopyrus kandleri (strain AV19 / DSM 6324 / JCM 9639 / NBRC 100938).